We begin with the raw amino-acid sequence, 143 residues long: MKKILTLAAIVLAIGGCSGQQAETQATPVNIKSLAGDSAVTDIRPADAMPVYPARGKALERSFTDQPPLIPHKDDYKITLDKNGCLTCHSWDKAARMKATPVAKSHVIDDKGTLNGHNYFCTQCHVAQAENKAPLVENKFSTQ.

Residues 1–22 (MKKILTLAAIVLAIGGCSGQQA) form the signal peptide. Residues H72, C85, C88, H89, H106, C121, C124, and H125 each coordinate heme c.

It belongs to the NapB family. Component of the periplasmic nitrate reductase NapAB complex composed of NapA and NapB. Binds 2 heme C groups per subunit.

The protein localises to the periplasm. In terms of biological role, electron transfer subunit of the periplasmic nitrate reductase complex NapAB. Receives electrons from the membrane-anchored tetraheme c-type CymA protein and transfers these to NapA subunit, thus allowing electron flow between membrane and periplasm. Not essential for nitrate reduction but confers advantage to the organism when grown on nitrate and thereby a fitness gain in utilizing nitrate. This is Periplasmic nitrate reductase, electron transfer subunit from Shewanella oneidensis (strain ATCC 700550 / JCM 31522 / CIP 106686 / LMG 19005 / NCIMB 14063 / MR-1).